We begin with the raw amino-acid sequence, 382 residues long: RNA exonuclease 3 (382 aa).

Positions 223 to 369 (VLALDCEMAY…EDAIAAMDVV (147 aa)) constitute an Exonuclease domain.

This sequence belongs to the REXO1/REXO3 family.

It is found in the cytoplasm. The protein localises to the nucleus. 3' to 5' exoribonuclease required for proper 3' end maturation of MRP RNA and of the U5L snRNA. This is RNA exonuclease 3 (REX3) from Eremothecium gossypii (strain ATCC 10895 / CBS 109.51 / FGSC 9923 / NRRL Y-1056) (Yeast).